The chain runs to 460 residues: tRNA modification GTPase MnmE (460 aa).

3 residues coordinate (6S)-5-formyl-5,6,7,8-tetrahydrofolate: Arg29, Glu91, and Lys132. Residues 227–383 (GISIALIGKT…LIDTIIKKCG (157 aa)) form the TrmE-type G domain. Asn237 is a binding site for K(+). GTP contacts are provided by residues 237 to 242 (NVGKSS), 256 to 262 (TNIPGTT), and 281 to 284 (DTAG). Ser241 lines the Mg(2+) pocket. 3 residues coordinate K(+): Thr256, Ile258, and Thr261. A Mg(2+)-binding site is contributed by Thr262. Lys460 contributes to the (6S)-5-formyl-5,6,7,8-tetrahydrofolate binding site.

This sequence belongs to the TRAFAC class TrmE-Era-EngA-EngB-Septin-like GTPase superfamily. TrmE GTPase family. As to quaternary structure, homodimer. Heterotetramer of two MnmE and two MnmG subunits. The cofactor is K(+).

The protein resides in the cytoplasm. Functionally, exhibits a very high intrinsic GTPase hydrolysis rate. Involved in the addition of a carboxymethylaminomethyl (cmnm) group at the wobble position (U34) of certain tRNAs, forming tRNA-cmnm(5)s(2)U34. The protein is tRNA modification GTPase MnmE of Prochlorococcus marinus (strain MIT 9301).